We begin with the raw amino-acid sequence, 335 residues long: Cytochrome c biogenesis protein CcsA (335 aa).

A run of 8 helical transmembrane segments spans residues 15–35 (FLLL…PNVT), 36–56 (WLPT…ATLL), 68–88 (LSNL…IHLV), 97–117 (LVGV…ALSL), 142–162 (VMML…AFLV), 243–263 (IIGL…VWAN), 278–298 (WALI…TKGW), and 304–324 (AILA…VNLL).

This sequence belongs to the CcmF/CycK/Ccl1/NrfE/CcsA family. As to quaternary structure, may interact with ccs1.

The protein localises to the cellular thylakoid membrane. In terms of biological role, required during biogenesis of c-type cytochromes (cytochrome c6 and cytochrome f) at the step of heme attachment. The polypeptide is Cytochrome c biogenesis protein CcsA (Crocosphaera subtropica (strain ATCC 51142 / BH68) (Cyanothece sp. (strain ATCC 51142))).